A 414-amino-acid polypeptide reads, in one-letter code: Multifunctional CCA protein (414 aa).

Gly-8 and Arg-11 together coordinate ATP. Residues Gly-8 and Arg-11 each contribute to the CTP site. Asp-21 and Asp-23 together coordinate Mg(2+). Residues Arg-91, Arg-143, and Arg-146 each contribute to the ATP site. Residues Arg-91, Arg-143, and Arg-146 each coordinate CTP. Positions 232 to 333 (TGVHVMMVID…TRLVERCDAL (102 aa)) constitute an HD domain.

It belongs to the tRNA nucleotidyltransferase/poly(A) polymerase family. Bacterial CCA-adding enzyme type 1 subfamily. Monomer. Can also form homodimers and oligomers. The cofactor is Mg(2+). Ni(2+) is required as a cofactor.

The enzyme catalyses a tRNA precursor + 2 CTP + ATP = a tRNA with a 3' CCA end + 3 diphosphate. It catalyses the reaction a tRNA with a 3' CCA end + 2 CTP + ATP = a tRNA with a 3' CCACCA end + 3 diphosphate. Its function is as follows. Catalyzes the addition and repair of the essential 3'-terminal CCA sequence in tRNAs without using a nucleic acid template. Adds these three nucleotides in the order of C, C, and A to the tRNA nucleotide-73, using CTP and ATP as substrates and producing inorganic pyrophosphate. tRNA 3'-terminal CCA addition is required both for tRNA processing and repair. Also involved in tRNA surveillance by mediating tandem CCA addition to generate a CCACCA at the 3' terminus of unstable tRNAs. While stable tRNAs receive only 3'-terminal CCA, unstable tRNAs are marked with CCACCA and rapidly degraded. The sequence is that of Multifunctional CCA protein from Cupriavidus metallidurans (strain ATCC 43123 / DSM 2839 / NBRC 102507 / CH34) (Ralstonia metallidurans).